A 266-amino-acid chain; its full sequence is MKFIAENLTKLRTISPLVQNITNYVVMNSTANTLLALGASPVMAHAKEELEEMIAISSALVVNIGTLDEYWIPSMEKAVKIASDLKKPIILDPVGAGATKLRTNTALKLLDIGNVSVLRGNFGEISALLGEHGKTKGVDSAVYDNNEALNISKNASKEFNTVSTVTGPIDYVSNGKEIYSISNGHEMLSKVTGTGCASTSIIGAFLAVEEPLKASVSGLVTYGISAEMAFEESFYPGTFQAKLYDWLYRIDEKLILEKAKVNRIDI.

Methionine 43 contributes to the substrate binding site. Residues arginine 119 and threonine 166 each contribute to the ATP site. Glycine 193 contacts substrate.

This sequence belongs to the Thz kinase family. Mg(2+) is required as a cofactor.

It catalyses the reaction 5-(2-hydroxyethyl)-4-methylthiazole + ATP = 4-methyl-5-(2-phosphooxyethyl)-thiazole + ADP + H(+). It functions in the pathway cofactor biosynthesis; thiamine diphosphate biosynthesis; 4-methyl-5-(2-phosphoethyl)-thiazole from 5-(2-hydroxyethyl)-4-methylthiazole: step 1/1. Its function is as follows. Catalyzes the phosphorylation of the hydroxyl group of 4-methyl-5-beta-hydroxyethylthiazole (THZ). This Methanococcus vannielii (strain ATCC 35089 / DSM 1224 / JCM 13029 / OCM 148 / SB) protein is Hydroxyethylthiazole kinase.